The following is a 230-amino-acid chain: Ribosomal RNA small subunit methyltransferase I (230 aa).

Belongs to the methyltransferase superfamily. RsmI family.

The protein resides in the cytoplasm. The enzyme catalyses cytidine(1402) in 16S rRNA + S-adenosyl-L-methionine = 2'-O-methylcytidine(1402) in 16S rRNA + S-adenosyl-L-homocysteine + H(+). Catalyzes the 2'-O-methylation of the ribose of cytidine 1402 (C1402) in 16S rRNA. This is Ribosomal RNA small subunit methyltransferase I from Hydrogenobaculum sp. (strain Y04AAS1).